Here is a 368-residue protein sequence, read N- to C-terminus: uncharacterized protein (368 aa).

Disordered stretches follow at residues 1–22 (MEKSSNTTGSGGPKSDSQLPEK) and 282–317 (KHLGRRSKKAQKRVEKMKKAYKESKEEKASSQEPPA). The span at 293 to 311 (KRVEKMKKAYKESKEEKAS) shows a compositional bias: basic and acidic residues.

This is an uncharacterized protein from Mus musculus (Mouse).